The chain runs to 313 residues: Acetaldehyde dehydrogenase (313 aa).

Residue 13–16 participates in NAD(+) binding; it reads SGNI. Residue Cys133 is the Acyl-thioester intermediate of the active site. Residues 164 to 172 and Asn291 each bind NAD(+); that span reads SAGPGTRAN.

Belongs to the acetaldehyde dehydrogenase family.

The enzyme catalyses acetaldehyde + NAD(+) + CoA = acetyl-CoA + NADH + H(+). The protein is Acetaldehyde dehydrogenase of Cupriavidus pinatubonensis (strain JMP 134 / LMG 1197) (Cupriavidus necator (strain JMP 134)).